Here is a 522-residue protein sequence, read N- to C-terminus: Ribonuclease Y (522 aa).

The chain crosses the membrane as a helical span at residues 7 to 27; it reads STILYCLFFFFLGIAAVLAFI. In terms of domain architecture, KH spans 212–272; it reads TTSTVGVPTD…VRREVARMSL (61 aa). Residues 338-431 enclose the HD domain; the sequence is VLRHSVEVAF…VATADACSAS (94 aa).

This sequence belongs to the RNase Y family.

The protein localises to the cell membrane. Its function is as follows. Endoribonuclease that initiates mRNA decay. The polypeptide is Ribonuclease Y (Rhodopirellula baltica (strain DSM 10527 / NCIMB 13988 / SH1)).